Reading from the N-terminus, the 525-residue chain is Lymphocyte activation gene 3 protein (525 aa).

A signal peptide spans 1–23 (MRQDLFLDLLLLQLLWEAPVVSS). The Extracellular segment spans residues 24 to 442 (GPGKELSVVW…ISGDLKGGHL (419 aa)). Residues 37–163 (GAPVHLPCSL…FSCSLRLRVG (127 aa)) form the Ig-like V-type domain. The interval 37–246 (GAPVHLPCSL…LTYRDGFNVS (210 aa)) is interaction with FGL1. An intrachain disulfide couples cysteine 44 to cysteine 156. 3 consecutive Ig-like C2-type domains span residues 164 to 246 (QASM…FNVS), 258 to 341 (PVAP…AAVT), and 345 to 412 (ITVT…EGQK). Asparagine 184 is a glycosylation site (N-linked (GlcNAc...) asparagine). Residues cysteine 185 and cysteine 235 are joined by a disulfide bond. Residues asparagine 244 and asparagine 309 are each glycosylated (N-linked (GlcNAc...) asparagine). Cystine bridges form between cysteine 276/cysteine 327 and cysteine 363/cysteine 405. Positions 422 to 442 (ESSSGAWSAKRISGDLKGGHL) are connecting peptide. The helical transmembrane segment at 443 to 463 (FLSLILGALALFLLVTGAFGF) threads the bilayer. Topologically, residues 464–525 (HLWRRQLLRR…PELEPESRQL (62 aa)) are cytoplasmic. The interval 486–525 (PVQSKIEELEREPETEMEPETEPDPEPQPEPELEPESRQL) is disordered. Positions 490 to 495 (KIEELE) match the KIEELE motif motif. Over residues 490–499 (KIEELEREPE) the composition is skewed to basic and acidic residues. The segment at 493–522 (ELEREPETEMEPETEPDPEPQPEPELEPES) is 15 X 2 AA tandem repeats of E-X. Residues 500-519 (TEMEPETEPDPEPQPEPELE) are compositionally biased toward acidic residues.

The protein belongs to the LAG3 family. Interacts with MHC class II (MHC-II); selectively recognizes stable complexes of peptide and MHC-II. Interacts with FGL1 (via the Fibrinogen C-terminal domain). Proteolytically cleaved by ADAM10 and ADAM17 within the connecting peptide region, leading to release of Secreted lymphocyte activation gene 3 protein (sLAG-3). ADAM10 mediates constitutive cleavage, but cleavage increases following T-cell activation, whereas shedding by ADAM17 is induced by TCR signaling in a PRKCQ-dependent manner.

The protein resides in the cell membrane. The protein localises to the secreted. Lymphocyte activation gene 3 protein: Inhibitory receptor on antigen activated T-cells. Delivers inhibitory signals upon binding to ligands, such as FGL1. FGL1 constitutes a major ligand of LAG3 and is responsible for LAG3 T-cell inhibitory function. Following TCR engagement, LAG3 associates with CD3-TCR in the immunological synapse and directly inhibits T-cell activation. May inhibit antigen-specific T-cell activation in synergy with PDCD1/PD-1, possibly by acting as a coreceptor for PDCD1/PD-1. Negatively regulates the proliferation, activation, effector function and homeostasis of both CD8(+) and CD4(+) T-cells. Also mediates immune tolerance: constitutively expressed on a subset of regulatory T-cells (Tregs) and contributes to their suppressive function. Also acts as a negative regulator of plasmacytoid dendritic cell (pDCs) activation. Binds MHC class II (MHC-II); the precise role of MHC-II-binding is however unclear. Its function is as follows. May function as a ligand for MHC class II (MHC-II) on antigen-presenting cells (APC), promoting APC activation/maturation and driving Th1 immune response. The sequence is that of Lymphocyte activation gene 3 protein (Lag3) from Rattus norvegicus (Rat).